The following is a 60-amino-acid chain: Metallothionein (60 aa).

N-acetylmethionine is present on M1. Residues 1-28 are beta; sequence MDPCECSKTGTCNCGGSCTCKNCSCTTC. A divalent metal cation is bound by residues C4, C6, C12, C14, C18, C20, C23, C25, C28, C32, C33, C35, C36, C40, C43, C47, C49, C54, C58, and C59. Positions 29-60 are alpha; that stretch reads TKSCCPCCPSGCPKCASGCVCKGKTCDTTCCQ.

The protein belongs to the metallothionein superfamily. Type 1 family.

In terms of biological role, metallothioneins have a high content of cysteine residues that bind various heavy metals. The chain is Metallothionein (mt) from Pseudopleuronectes americanus (Winter flounder).